Consider the following 410-residue polypeptide: Beta-arrestin-2 (410 aa).

A Phosphotyrosine modification is found at Tyr-48. Hydroxyproline; by PHD2 occurs at positions 176 and 181. The segment at 241-410 (ADICLFSTAQ…KDDDCDDQFC (170 aa)) is interaction with TRAF6. Ser-361 bears the Phosphoserine mark. The interaction with AP2B1 stretch occupies residues 378 to 410 (DTNYATDDDIVFEDFARLRLKGMKDDDCDDQFC). At Thr-383 the chain carries Phosphothreonine; by CaMK2. Residues 386 to 396 (DIVFEDFARLR) carry the [DE]-X(1,2)-F-X-X-[FL]-X-X-X-R motif motif.

This sequence belongs to the arrestin family. Homooligomer; the self-association is mediated by InsP6-binding. Heterooligomer with ARRB1; the association is mediated by InsP6-binding. Interacts with ADRB2 and CHRM2. Interacts with PDE4A. Interacts with PDE4D. Interacts with MAPK10, MAPK1 and MAPK3. Interacts with DRD2. Interacts with FSHR. Interacts with CLTC. Interacts with HTR2C. Interacts with CCR5. Interacts with CXCR4. Interacts with SRC. Interacts with DUSP16; the interaction is interrupted by stimulation of AGTR1 and activation of MAPK10. Interacts with CHUK; the interaction is enhanced stimulation of ADRB2. Interacts with RELA. Interacts with MDM2; the interaction is enhanced by activation of GPCRs. Interacts with SLC9A5. Interacts with TRAF6. Interacts with IGF1R. Interacts with ENG. Interacts with KIR2DL1, KIR2DL3 and KIR2DL4. Interacts with LDLR. Interacts with AP2B1. Interacts with C5AR1. Interacts with RAF1. Interacts with MAP2K1. Interacts with MAPK1. Interacts with MAPK10; the interaction enhances MAPK10 activation by MAP3K5. Interacts with MAP2K4; the interaction is enhanced by presence of MAP3K5 and MAPK10. Interacts with MAP3K5. Interacts with AKT1. Interacts with IKBKB and MAP3K14. Interacts with SMO (activated). Interacts with GSK3A and GSK3B. Associates with protein phosphatase 2A (PP2A). Interacts with CXCR4; the interaction is dependent on C-terminal phosphorylation of CXCR4 and allows activation of MAPK1 and MAPK3. Interacts with GPR143. Interacts with HCK and CXCR1 (phosphorylated). Interacts with ACKR3 and ACKR4. Interacts with ARRDC1; the interaction is direct. Interacts with GPR61, GPR62 and GPR135. Interacts (via NACHT and LRR domains) with NLRP3; this interaction is direct and inducible by omega-3 polyunsaturated fatty acids (PUFAs). Interacts with FFAR4 (via C-terminus); this interaction is stimulated by long-chain fatty acids (LCFAs). Interacts with GPR35. Interacts with GPR84. Interacts with TIGIT; this interaction inhibits the NF-kappa-B pathway. Interacts with TGFBR3. Post-translationally, phosphorylated at Thr-383 in the cytoplasm; probably dephosphorylated at the plasma membrane. The phosphorylation does not regulate internalization and recycling of ADRB2, interaction with clathrin or AP2B1. The ubiquitination status appears to regulate the formation and trafficking of beta-arrestin-GPCR complexes and signaling. Ubiquitination appears to occur GPCR-specific. Ubiquitinated by MDM2; the ubiquitination is required for rapid internalization of ADRB2. Deubiquitinated by USP33; the deubiquitination leads to a dissociation of the beta-arrestin-GPCR complex. Stimulation of a class A GPCR, such as ADRB2, induces transient ubiquitination and subsequently promotes association with USP33. Stimulation of a class B GPCR promotes a sustained ubiquitination. Deubiquitinated by USP20; allowing USP20 to deubiquitinate TRAF6 leading to inhibition of NF-kappa-B signaling. In terms of processing, hydroxylation by PHD2 modulates the rate of internalization by slowing down recruitment to the plasma membrane and inhibiting subsequent co-internalization with class A receptors. Predominantly localized in neuronal tissues and in the spleen.

The protein resides in the cytoplasm. Its subcellular location is the nucleus. The protein localises to the cell membrane. It is found in the membrane. It localises to the clathrin-coated pit. The protein resides in the cytoplasmic vesicle. Functionally, functions in regulating agonist-mediated G-protein coupled receptor (GPCR) signaling by mediating both receptor desensitization and resensitization processes. During homologous desensitization, beta-arrestins bind to the GPRK-phosphorylated receptor and sterically preclude its coupling to the cognate G-protein; the binding appears to require additional receptor determinants exposed only in the active receptor conformation. The beta-arrestins target many receptors for internalization by acting as endocytic adapters (CLASPs, clathrin-associated sorting proteins) and recruiting the GPRCs to the adapter protein 2 complex 2 (AP-2) in clathrin-coated pits (CCPs). However, the extent of beta-arrestin involvement appears to vary significantly depending on the receptor, agonist and cell type. Internalized arrestin-receptor complexes traffic to intracellular endosomes, where they remain uncoupled from G-proteins. Two different modes of arrestin-mediated internalization occur. Class A receptors, like ADRB2, OPRM1, ENDRA, D1AR and ADRA1B dissociate from beta-arrestin at or near the plasma membrane and undergo rapid recycling. Class B receptors, like AVPR2, AGTR1, NTSR1, TRHR and TACR1 internalize as a complex with arrestin and traffic with it to endosomal vesicles, presumably as desensitized receptors, for extended periods of time. Receptor resensitization then requires that receptor-bound arrestin is removed so that the receptor can be dephosphorylated and returned to the plasma membrane. Mediates endocytosis of CCR7 following ligation of CCL19 but not CCL21. Involved in internalization of P2RY1, P2RY4, P2RY6 and P2RY11 and ATP-stimulated internalization of P2RY2. Involved in phosphorylation-dependent internalization of OPRD1 and subsequent recycling or degradation. Involved in ubiquitination of IGF1R. Beta-arrestins function as multivalent adapter proteins that can switch the GPCR from a G-protein signaling mode that transmits short-lived signals from the plasma membrane via small molecule second messengers and ion channels to a beta-arrestin signaling mode that transmits a distinct set of signals that are initiated as the receptor internalizes and transits the intracellular compartment. Acts as a signaling scaffold for MAPK pathways such as MAPK1/3 (ERK1/2) and MAPK10 (JNK3). ERK1/2 and JNK3 activated by the beta-arrestin scaffold are largely excluded from the nucleus and confined to cytoplasmic locations such as endocytic vesicles, also called beta-arrestin signalosomes. Acts as a signaling scaffold for the AKT1 pathway. GPCRs for which the beta-arrestin-mediated signaling relies on both ARRB1 and ARRB2 (codependent regulation) include ADRB2, F2RL1 and PTH1R. For some GPCRs the beta-arrestin-mediated signaling relies on either ARRB1 or ARRB2 and is inhibited by the other respective beta-arrestin form (reciprocal regulation). Increases ERK1/2 signaling in AGTR1- and AVPR2-mediated activation (reciprocal regulation). Involved in CCR7-mediated ERK1/2 signaling involving ligand CCL19. Is involved in type-1A angiotensin II receptor/AGTR1-mediated ERK activity. Is involved in type-1A angiotensin II receptor/AGTR1-mediated MAPK10 activity. Is involved in dopamine-stimulated AKT1 activity in the striatum by disrupting the association of AKT1 with its negative regulator PP2A. Involved in AGTR1-mediated chemotaxis. Appears to function as signaling scaffold involved in regulation of MIP-1-beta-stimulated CCR5-dependent chemotaxis. Involved in attenuation of NF-kappa-B-dependent transcription in response to GPCR or cytokine stimulation by interacting with and stabilizing CHUK. Suppresses UV-induced NF-kappa-B-dependent activation by interacting with CHUK. The function is promoted by stimulation of ADRB2 and dephosphorylation of ARRB2. Involved in IL8-mediated granule release in neutrophils. Involved in p53/TP53-mediated apoptosis by regulating MDM2 and reducing the MDM2-mediated degradation of p53/TP53. May serve as nuclear messenger for GPCRs. Upon stimulation of OR1D2, may be involved in regulation of gene expression during the early processes of fertilization. Also involved in regulation of receptors other than GPCRs. Involved in endocytosis of TGFBR2 and TGFBR3 and down-regulates TGF-beta signaling such as NF-kappa-B activation. Involved in endocytosis of low-density lipoprotein receptor/LDLR. Involved in endocytosis of smoothened homolog/Smo, which also requires GRK2. Involved in endocytosis of SLC9A5. Involved in endocytosis of ENG and subsequent TGF-beta-mediated ERK activation and migration of epithelial cells. Involved in Toll-like receptor and IL-1 receptor signaling through the interaction with TRAF6 which prevents TRAF6 autoubiquitination and oligomerization required for activation of NF-kappa-B and JUN. Involved in insulin resistance by acting as insulin-induced signaling scaffold for SRC, AKT1 and INSR. Involved in regulation of inhibitory signaling of natural killer cells by recruiting PTPN6 and PTPN11 to KIR2DL1. Involved in the internalization of the atypical chemokine receptor ACKR3. Acts as an adapter protein coupling FFAR4 receptor to specific downstream signaling pathways, as well as mediating receptor endocytosis. During the activation step of NLRP3 inflammasome, directly associates with NLRP3 leading to inhibition of pro-inflammatory cytokine release and inhibition of inflammation. The chain is Beta-arrestin-2 (Arrb2) from Rattus norvegicus (Rat).